Consider the following 325-residue polypeptide: Tetraacyldisaccharide 4'-kinase (325 aa).

55–62 (TAGGNGKT) contacts ATP.

This sequence belongs to the LpxK family.

The catalysed reaction is a lipid A disaccharide + ATP = a lipid IVA + ADP + H(+). The protein operates within glycolipid biosynthesis; lipid IV(A) biosynthesis; lipid IV(A) from (3R)-3-hydroxytetradecanoyl-[acyl-carrier-protein] and UDP-N-acetyl-alpha-D-glucosamine: step 6/6. Transfers the gamma-phosphate of ATP to the 4'-position of a tetraacyldisaccharide 1-phosphate intermediate (termed DS-1-P) to form tetraacyldisaccharide 1,4'-bis-phosphate (lipid IVA). The sequence is that of Tetraacyldisaccharide 4'-kinase from Salmonella paratyphi A (strain ATCC 9150 / SARB42).